Reading from the N-terminus, the 61-residue chain is Small ribosomal subunit protein uS14B (61 aa).

Zn(2+) is bound by residues Cys24, Cys27, Cys40, and Cys43.

The protein belongs to the universal ribosomal protein uS14 family. Zinc-binding uS14 subfamily. In terms of assembly, part of the 30S ribosomal subunit. Contacts proteins S3 and S10. Zn(2+) is required as a cofactor.

Functionally, binds 16S rRNA, required for the assembly of 30S particles and may also be responsible for determining the conformation of the 16S rRNA at the A site. The chain is Small ribosomal subunit protein uS14B from Shouchella clausii (strain KSM-K16) (Alkalihalobacillus clausii).